The primary structure comprises 158 residues: 6,7-dimethyl-8-ribityllumazine synthase (158 aa).

5-amino-6-(D-ribitylamino)uracil-binding positions include Phe-23, 61–63, and 85–87; these read SFE and AVI. 90 to 91 lines the (2S)-2-hydroxy-3-oxobutyl phosphate pocket; the sequence is ET. The active-site Proton donor is His-93. Phe-118 provides a ligand contact to 5-amino-6-(D-ribitylamino)uracil. Arg-132 serves as a coordination point for (2S)-2-hydroxy-3-oxobutyl phosphate.

It belongs to the DMRL synthase family.

The catalysed reaction is (2S)-2-hydroxy-3-oxobutyl phosphate + 5-amino-6-(D-ribitylamino)uracil = 6,7-dimethyl-8-(1-D-ribityl)lumazine + phosphate + 2 H2O + H(+). It participates in cofactor biosynthesis; riboflavin biosynthesis; riboflavin from 2-hydroxy-3-oxobutyl phosphate and 5-amino-6-(D-ribitylamino)uracil: step 1/2. Functionally, catalyzes the formation of 6,7-dimethyl-8-ribityllumazine by condensation of 5-amino-6-(D-ribitylamino)uracil with 3,4-dihydroxy-2-butanone 4-phosphate. This is the penultimate step in the biosynthesis of riboflavin. This Prochlorococcus marinus subsp. pastoris (strain CCMP1986 / NIES-2087 / MED4) protein is 6,7-dimethyl-8-ribityllumazine synthase.